Reading from the N-terminus, the 616-residue chain is Xaa-Pro aminopeptidase app-1 (616 aa).

2 residues coordinate a peptide: Arg-78 and His-392. Zn(2+) is bound by residues Asp-413, Asp-424, and His-487. A peptide-binding residues include His-487, His-496, and Glu-522. Zn(2+)-binding residues include Glu-522 and Glu-536.

The protein belongs to the peptidase M24B family. Homodimer. May interact with pid-2, pid-4 and pid-5. Zn(2+) is required as a cofactor. As to expression, specifically expressed in the intestine.

The protein resides in the cytoplasm. It catalyses the reaction Release of any N-terminal amino acid, including proline, that is linked to proline, even from a dipeptide or tripeptide.. Strongly inhibited by the metal ion chelators EDTA and 1,10-phenanthroline. Also inhibited by apstatin. Activity towards bradykinin is inhibited by Mn(2+) and Zn(2+) at all concentrations tested, whereas Co(2+) is inhibitory at concentrations above 100 uM and activatory at 10 uM. Functionally, catalyzes the removal of a penultimate prolyl residue from the N-termini of peptides, such as Arg-Pro-Pro. Has activity towards the flp-9 neuropeptide KPSFVRF-amide. The chain is Xaa-Pro aminopeptidase app-1 from Caenorhabditis elegans.